The primary structure comprises 406 residues: Putative nickel insertion protein (406 aa).

This sequence belongs to the LarC family.

In Methanosphaera stadtmanae (strain ATCC 43021 / DSM 3091 / JCM 11832 / MCB-3), this protein is Putative nickel insertion protein.